Consider the following 206-residue polypeptide: Ribosomal RNA large subunit methyltransferase E (206 aa).

Residues glycine 61, tryptophan 63, aspartate 81, aspartate 97, and aspartate 122 each coordinate S-adenosyl-L-methionine. The active-site Proton acceptor is the lysine 162.

It belongs to the class I-like SAM-binding methyltransferase superfamily. RNA methyltransferase RlmE family.

The protein localises to the cytoplasm. It carries out the reaction uridine(2552) in 23S rRNA + S-adenosyl-L-methionine = 2'-O-methyluridine(2552) in 23S rRNA + S-adenosyl-L-homocysteine + H(+). In terms of biological role, specifically methylates the uridine in position 2552 of 23S rRNA at the 2'-O position of the ribose in the fully assembled 50S ribosomal subunit. This chain is Ribosomal RNA large subunit methyltransferase E, found in Neisseria gonorrhoeae (strain ATCC 700825 / FA 1090).